Consider the following 360-residue polypeptide: UPF0284 protein APE_2029.1 (360 aa).

The protein belongs to the UPF0284 family.

The protein is UPF0284 protein APE_2029.1 of Aeropyrum pernix (strain ATCC 700893 / DSM 11879 / JCM 9820 / NBRC 100138 / K1).